The chain runs to 200 residues: NADH-quinone oxidoreductase subunit C (200 aa).

This sequence belongs to the complex I 30 kDa subunit family. NDH-1 is composed of 14 different subunits. Subunits NuoB, C, D, E, F, and G constitute the peripheral sector of the complex.

The protein resides in the cell inner membrane. It catalyses the reaction a quinone + NADH + 5 H(+)(in) = a quinol + NAD(+) + 4 H(+)(out). In terms of biological role, NDH-1 shuttles electrons from NADH, via FMN and iron-sulfur (Fe-S) centers, to quinones in the respiratory chain. The immediate electron acceptor for the enzyme in this species is believed to be ubiquinone. Couples the redox reaction to proton translocation (for every two electrons transferred, four hydrogen ions are translocated across the cytoplasmic membrane), and thus conserves the redox energy in a proton gradient. The sequence is that of NADH-quinone oxidoreductase subunit C from Burkholderia multivorans (strain ATCC 17616 / 249).